The primary structure comprises 104 residues: AVIToxin-VAR1 (104 aa).

The first 19 residues, 1–19 (MRSLLCAPLLLLLLSAGES), serve as a signal peptide directing secretion. Disulfide bonds link Cys-26-Cys-38, Cys-32-Cys-50, Cys-37-Cys-78, Cys-60-Cys-86, and Cys-80-Cys-96.

The protein belongs to the AVIT (prokineticin) family. Expressed by the venom gland.

Its subcellular location is the secreted. Potent agonist for both PKR1/PROKR1 and PKR2/PROKR2. Potently contracts gastrointestinal (GI) smooth muscle. The sequence is that of AVIToxin-VAR1 from Varanus varius (Lace monitor lizard).